Reading from the N-terminus, the 219-residue chain is C-8 sterol isomerase erg2 (219 aa).

Residues 1–21 (MKLTKFLTVFIPFIAGLIYYI) traverse the membrane as a helical segment.

It belongs to the ERG2 family.

The protein localises to the endoplasmic reticulum membrane. The enzyme catalyses fecosterol = episterol. It participates in steroid metabolism; ergosterol biosynthesis. In terms of biological role, C-8 sterol isomerase; part of the third module of ergosterol biosynthesis pathway that includes by the late steps of the pathway. Erg2 catalyzes the reaction which results in unsaturation at C-7 in the B ring of sterols and thus converts fecosterol to episterol. The third module or late pathway involves the ergosterol synthesis itself through consecutive reactions that mainly occur in the endoplasmic reticulum (ER) membrane. Firstly, the squalene synthase erg9 catalyzes the condensation of 2 farnesyl pyrophosphate moieties to form squalene, which is the precursor of all steroids. Secondly, squalene is converted into lanosterol by the consecutive action of the squalene epoxidase erg1 and the lanosterol synthase erg7. The lanosterol 14-alpha-demethylase erg11/cyp1 catalyzes C14-demethylation of lanosterol to produce 4,4'-dimethyl cholesta-8,14,24-triene-3-beta-ol. In the next steps, a complex process involving various demethylation, reduction and desaturation reactions catalyzed by the C-14 reductase erg24 and the C-4 demethylation complex erg25-erg26-erg27 leads to the production of zymosterol. Erg28 likely functions in the C-4 demethylation complex reaction by tethering erg26 and Erg27 to the endoplasmic reticulum or to facilitate interaction between these proteins. Then, the sterol 24-C-methyltransferase erg6 catalyzes the methyl transfer from S-adenosyl-methionine to the C-24 of zymosterol to form fecosterol. The C-8 sterol isomerase erg2 catalyzes the reaction which results in unsaturation at C-7 in the B ring of sterols and thus converts fecosterol to episterol. The sterol-C5-desaturases erg31 and erg32 then catalyze the introduction of a C-5 double bond in the B ring to produce 5-dehydroepisterol. The C-22 sterol desaturase erg5 further converts 5-dehydroepisterol into ergosta-5,7,22,24(28)-tetraen-3beta-ol by forming the C-22(23) double bond in the sterol side chain. Finally, ergosta-5,7,22,24(28)-tetraen-3beta-ol is substrate of the C-24(28) sterol reductase erg4 to produce ergosterol. In the genus Schizosaccharomyces, a second route exists between lanosterol and fecosterol, via the methylation of lanosterol to eburicol by erg6, followed by C14-demethylation by erg11/cyp1 and C4-demethylation by the demethylation complex erg25-erg26-erg27. This Schizosaccharomyces pombe (strain 972 / ATCC 24843) (Fission yeast) protein is C-8 sterol isomerase erg2.